Here is a 1409-residue protein sequence, read N- to C-terminus: Copia protein (1409 aa).

Residues 230-247 form a CCHC-type zinc finger; sequence VKCHHCGREGHIKKDCFH. The For protease activity role is filled by Asp292. In terms of domain architecture, Integrase catalytic spans 476–644; that stretch reads HIKRPLFVVH…TPYEMWHNKK (169 aa). Disordered stretches follow at residues 760–780 and 805–851; these read SKESENKNFPNDSRKIIQTEF and NESK…NDGI. The segment covering 827–841 has biased composition (basic and acidic residues); that stretch reads ESRESETAEHLKEIG.

This chain is Copia protein (GIP), found in Drosophila melanogaster (Fruit fly).